The following is a 296-amino-acid chain: Probable xyloglucan endotransglucosylase/hydrolase 1 (296 aa).

A signal peptide spans M1–C22. The region spanning G23–Y221 is the GH16 domain. The active-site Nucleophile is the E107. Catalysis depends on E111, which acts as the Proton donor. Position 111 (E111) interacts with xyloglucan. N-linked (GlcNAc...) asparagine glycosylation is present at N115. Xyloglucan contacts are provided by residues Q124–N126, N134–E136, D200–W201, and G205. Intrachain disulfides connect C229/C240 and C277/C290. R282 contacts xyloglucan.

It belongs to the glycosyl hydrolase 16 family. XTH group 1 subfamily. Contains at least one intrachain disulfide bond essential for its enzymatic activity.

It is found in the secreted. The protein resides in the cell wall. The protein localises to the extracellular space. It localises to the apoplast. The catalysed reaction is breaks a beta-(1-&gt;4) bond in the backbone of a xyloglucan and transfers the xyloglucanyl segment on to O-4 of the non-reducing terminal glucose residue of an acceptor, which can be a xyloglucan or an oligosaccharide of xyloglucan.. In terms of biological role, catalyzes xyloglucan endohydrolysis (XEH) and/or endotransglycosylation (XET). Cleaves and religates xyloglucan polymers, an essential constituent of the primary cell wall, and thereby participates in cell wall construction of growing tissues. This is Probable xyloglucan endotransglucosylase/hydrolase 1 (XTH1) from Solanum lycopersicum (Tomato).